The chain runs to 104 residues: L-rhamnose mutarotase (104 aa).

Position 18 (tyrosine 18) interacts with substrate. The active-site Proton donor is the histidine 22. Residues tyrosine 41 and 76–77 (WW) each bind substrate.

This sequence belongs to the rhamnose mutarotase family. In terms of assembly, homodimer.

The protein localises to the cytoplasm. The catalysed reaction is alpha-L-rhamnose = beta-L-rhamnose. The protein operates within carbohydrate metabolism; L-rhamnose metabolism. Involved in the anomeric conversion of L-rhamnose. This is L-rhamnose mutarotase from Escherichia fergusonii (strain ATCC 35469 / DSM 13698 / CCUG 18766 / IAM 14443 / JCM 21226 / LMG 7866 / NBRC 102419 / NCTC 12128 / CDC 0568-73).